The following is a 219-amino-acid chain: Eukaryotic translation initiation factor 3 subunit K (219 aa).

Positions 43-205 (YDLEANLAVL…SVKPKNIVEK (163 aa)) constitute a PCI domain.

The protein belongs to the eIF-3 subunit K family. As to quaternary structure, component of the eukaryotic translation initiation factor 3 (eIF-3) complex, which is composed of 13 subunits: eif3a, eif3b, eif3c, eif3d, eif3e, eif3f, eif3g, eif3h, eif3i, eif3j, eif3k, eif3l and eif3m.

Its subcellular location is the nucleus. It localises to the cytoplasm. Functionally, component of the eukaryotic translation initiation factor 3 (eIF-3) complex, which is involved in protein synthesis of a specialized repertoire of mRNAs and, together with other initiation factors, stimulates binding of mRNA and methionyl-tRNAi to the 40S ribosome. The eIF-3 complex specifically targets and initiates translation of a subset of mRNAs involved in cell proliferation. This Danio rerio (Zebrafish) protein is Eukaryotic translation initiation factor 3 subunit K (eif3k).